Consider the following 320-residue polypeptide: MRSAQVYRWQIPMDAGVVLRDRRLKTRDGLYVCLRDGEREGWGEISPLPGFSSETWEEAQTALLTWVNDWLQRSDALPEMPSVAFGASCALAELTGVLPAAADYRAAPLCTGDPDDLVLRLADMPGEKIAKVKVGLYEAVRDGMVVNLLLEAIPDLHLRLDANRAWTPLKAQQFAKYVNPDYRPRIAFLEEPCKTRDDSCAFARETGIAIAWDESLREPDFVFEAQEGVSAVVIKPMLTGALDKVRAQVAAAHALGLTAVISSSIESSLGLTQLARIAAWLTPGTLPGLDTLHLMQTQQVRPWPGSALPCLNRDELERLL.

The active-site Proton donor is lysine 133. Mg(2+)-binding residues include aspartate 161, glutamate 190, and aspartate 213. Residue lysine 235 is the Proton acceptor of the active site.

The protein belongs to the mandelate racemase/muconate lactonizing enzyme family. MenC type 1 subfamily. Requires a divalent metal cation as cofactor.

The catalysed reaction is (1R,6R)-6-hydroxy-2-succinyl-cyclohexa-2,4-diene-1-carboxylate = 2-succinylbenzoate + H2O. Its pathway is quinol/quinone metabolism; 1,4-dihydroxy-2-naphthoate biosynthesis; 1,4-dihydroxy-2-naphthoate from chorismate: step 4/7. It participates in quinol/quinone metabolism; menaquinone biosynthesis. Converts 2-succinyl-6-hydroxy-2,4-cyclohexadiene-1-carboxylate (SHCHC) to 2-succinylbenzoate (OSB). This Salmonella arizonae (strain ATCC BAA-731 / CDC346-86 / RSK2980) protein is o-succinylbenzoate synthase.